A 673-amino-acid chain; its full sequence is UvrABC system protein B (673 aa).

The Helicase ATP-binding domain occupies 26–415 (EGLEDGLAHQ…GDVVDQVVRP (390 aa)). 39–46 (GVTGSGKT) contacts ATP. The Beta-hairpin motif lies at 92-115 (YYDYYQPEAYVPSSDTFIEKDASV). The Helicase C-terminal domain occupies 431–597 (QVDDLLSEIR…GLNKKVVDIL (167 aa)). The segment at 608–627 (AKGRGKSRPIVEPDNVPMDM) is disordered. A UVR domain is found at 633–668 (QQKIHELEGLMMQHAQNLEFEEAAQIRDQLHQLREL).

It belongs to the UvrB family. As to quaternary structure, forms a heterotetramer with UvrA during the search for lesions. Interacts with UvrC in an incision complex.

It is found in the cytoplasm. The UvrABC repair system catalyzes the recognition and processing of DNA lesions. A damage recognition complex composed of 2 UvrA and 2 UvrB subunits scans DNA for abnormalities. Upon binding of the UvrA(2)B(2) complex to a putative damaged site, the DNA wraps around one UvrB monomer. DNA wrap is dependent on ATP binding by UvrB and probably causes local melting of the DNA helix, facilitating insertion of UvrB beta-hairpin between the DNA strands. Then UvrB probes one DNA strand for the presence of a lesion. If a lesion is found the UvrA subunits dissociate and the UvrB-DNA preincision complex is formed. This complex is subsequently bound by UvrC and the second UvrB is released. If no lesion is found, the DNA wraps around the other UvrB subunit that will check the other stand for damage. In Escherichia coli O6:H1 (strain CFT073 / ATCC 700928 / UPEC), this protein is UvrABC system protein B.